The primary structure comprises 289 residues: Acetyl-coenzyme A carboxylase carboxyl transferase subunit beta (289 aa).

In terms of domain architecture, CoA carboxyltransferase N-terminal spans 27–289; sequence LWSKCPSCES…SFMRVPAGAA (263 aa). Positions 31, 34, 50, and 53 each coordinate Zn(2+). The C4-type zinc-finger motif lies at 31-53; sequence CPSCESVLYRTDLESNSEVCPKC.

It belongs to the AccD/PCCB family. As to quaternary structure, acetyl-CoA carboxylase is a heterohexamer composed of biotin carboxyl carrier protein (AccB), biotin carboxylase (AccC) and two subunits each of ACCase subunit alpha (AccA) and ACCase subunit beta (AccD). Zn(2+) is required as a cofactor.

It is found in the cytoplasm. It carries out the reaction N(6)-carboxybiotinyl-L-lysyl-[protein] + acetyl-CoA = N(6)-biotinyl-L-lysyl-[protein] + malonyl-CoA. It participates in lipid metabolism; malonyl-CoA biosynthesis; malonyl-CoA from acetyl-CoA: step 1/1. Its function is as follows. Component of the acetyl coenzyme A carboxylase (ACC) complex. Biotin carboxylase (BC) catalyzes the carboxylation of biotin on its carrier protein (BCCP) and then the CO(2) group is transferred by the transcarboxylase to acetyl-CoA to form malonyl-CoA. The polypeptide is Acetyl-coenzyme A carboxylase carboxyl transferase subunit beta (Methylobacillus flagellatus (strain ATCC 51484 / DSM 6875 / VKM B-1610 / KT)).